Consider the following 2367-residue polypeptide: Toxin B (2367 aa).

Residues 2–91 are four-helical bundle; the sequence is SLVNRKQLEK…EILELKNSNL (90 aa). The GT44 domain maps to 96-469; that stretch reads KNLHFIWIGG…YPEANTTITL (374 aa). Positions 96–469 are glucosyltransferase region; sequence KNLHFIWIGG…YPEANTTITL (374 aa). Residues 101–103, asparagine 139, 269–273, and 286–288 each bind UDP-alpha-D-glucose; these read IWI, SDILR, and DVD. Mg(2+) contacts are provided by aspartate 286, aspartate 288, and glutamate 516. Residue 519–521 coordinates UDP-alpha-D-glucose; it reads SLW. Positions 545–800 are autoprocessing region; that stretch reads GEDDNLDFSQ…KSKNLPELST (256 aa). Positions 546 and 547 each coordinate Zn(2+). Residues 568 to 775 form the Peptidase C80 domain; it reads SSSTKSSERG…EESIIKDISS (208 aa). Tyrosine 578, lysine 601, and lysine 648 together coordinate 1D-myo-inositol hexakisphosphate. Residue histidine 654 participates in Zn(2+) binding. The For protease activity role is filled by histidine 654. The active-site Nucleophile; for protease activity is the cysteine 699. Histidine 758 is a Zn(2+) binding site. 1D-myo-inositol hexakisphosphate is bound by residues lysine 765, lysine 776, and lysine 793. The segment at 801-1501 is translocation region; it reads LLQEIRNNSN…VVLIIKVYMD (701 aa). Interaction with host frizzled receptors FZD1, FZD2 and FZD7 stretches follow at residues 1434–1439, 1487–1512, and 1598–1600; these read LKTLMA, SELSDVVLIIKVYMDNSKPPFGYYSN, and SLK. 19 Cell wall-binding repeats span residues 1833-1852, 1854-1873, 1876-1895, 1926-1945, 1946-1965, 1967-1986, 1987-2006, 2007-2026, 2057-2076, 2077-2097, 2099-2118, 2119-2138, 2139-2158, 2209-2231, 2233-2252, 2253-2272, 2273-2292, 2323-2342, and 2343-2362; these read VSGLVYINDSLYYFKPPIKN, ITGFTTIGDDKYYFNPDNGG, SVGETIIDGKNYYFSQNGVL, FTGKLIIDENVYYFGDNYRA, AIEWQTLDDEVYYFSTDTGR, FKGLNQIGDDKFYFNSDGIM, QKGFVNINDKTFYFDDSGVM, KSGYTEIDGRYFYFAENGEM, YSGILNFNNKIYYFDDSFTA, VVGWKDLEDGSKYYFDENTAE, SIGISIINDGKYYFNDSGIM, QIGFVTINNEVFYFSDSGIV, ESGMQNIDDNYFYISENGLV, ETGWIYDSENESDKYYFDPEAKK, YKGINVIDDIKYYFDENGIM, RTGLITFEDNHYYFNEDGEM, QYGYLNIEDKMFYFSEDGIM, YTGWLDLDEKRYYFTDEYIA, and ATGSVIIDGEEYYFDPDTAQ. Residues 1835–2367 are receptor-binding (CROPS) region; sequence GLVYINDSLY…PDTAQLVISE (533 aa).

The protein belongs to the clostridial glucosylating toxin (LCGT) family. Interacts with host FZD1. Interacts with host FZD2; interaction promotes toxin entry into host cell and occupies the binding site for Wnt-adducted palmitoleate in FZD2, leading to prevent Wnt-binding and downstream Wnt signaling. Interacts with host FZD7. Interacts with host CSPG4. Interacts with host NECTIN3/PVRL3. Zn(2+) is required as a cofactor. Requires Mn(2+) as cofactor. The cofactor is Mg(2+). Undergoes autocatalytic cleavage to release the N-terminal part (Glucosyltransferase TcdB), which constitutes the active part of the toxin, in the host cytosol. 1D-myo-inositol hexakisphosphate-binding (InsP6) activates the peptidase C80 domain and promotes autoprocessing.

The protein resides in the secreted. It localises to the host endosome membrane. It is found in the host cytoplasm. The protein localises to the host cytosol. Its subcellular location is the host cell membrane. It catalyses the reaction L-threonyl-[protein] + UDP-alpha-D-glucose = 3-O-(alpha-D-glucosyl)-L-threonyl-[protein] + UDP + H(+). With respect to regulation, protease activity is activated upon binding to 1D-myo-inositol hexakisphosphate (InsP6), which induces conformational reorganization. Functionally, precursor of a cytotoxin that targets and disrupts the colonic epithelium, inducing the host inflammatory and innate immune responses and resulting in diarrhea and pseudomembranous colitis. TcdB constitutes the main toxin that mediates the pathology of C.difficile infection, an opportunistic pathogen that colonizes the colon when the normal gut microbiome is disrupted. Compared to TcdA, TcdB is more virulent and more important for inducing the host inflammatory and innate immune responses. This form constitutes the precursor of the toxin: it enters into host cells and mediates autoprocessing to release the active toxin (Glucosyltransferase TcdB) into the host cytosol. Targets colonic epithelia by binding to the frizzled receptors FZD1, FZD2 and FZD7, and enters host cells via clathrin-mediated endocytosis. Frizzled receptors constitute the major host receptors in the colonic epithelium, but other receptors, such as CSPG4 or NECTIN3/PVRL3, have been identified. Binding to carbohydrates and sulfated glycosaminoglycans on host cell surface also contribute to entry into cells. Once entered into host cells, acidification in the endosome promotes the membrane insertion of the translocation region and formation of a pore, leading to translocation of the GT44 and peptidase C80 domains across the endosomal membrane. This activates the peptidase C80 domain and autocatalytic processing, releasing the N-terminal part (Glucosyltransferase TcdB), which constitutes the active part of the toxin, in the cytosol. Active form of the toxin, which is released into the host cytosol following autoprocessing and inactivates small GTPases. Acts by mediating monoglucosylation of small GTPases of the Rho family (Rac1, RhoA, RhoB, RhoC, RhoG and Cdc42) in host cells at the conserved threonine residue located in the switch I region ('Thr-37/35'), using UDP-alpha-D-glucose as the sugar donor. Monoglucosylation of host small GTPases completely prevents the recognition of the downstream effector, blocking the GTPases in their inactive form, leading to actin cytoskeleton disruption and cell death, resulting in the loss of colonic epithelial barrier function. This chain is Toxin B, found in Clostridioides difficile (Peptoclostridium difficile).